The primary structure comprises 473 residues: 1-aminocyclopropane-1-carboxylate synthase (473 aa).

Substrate-binding positions include 84–85 (DY), Y145, and D151. At K273 the chain carries N6-(pyridoxal phosphate)lysine.

This sequence belongs to the class-I pyridoxal-phosphate-dependent aminotransferase family. As to quaternary structure, homodimer. The cofactor is pyridoxal 5'-phosphate.

It carries out the reaction S-adenosyl-L-methionine = 1-aminocyclopropane-1-carboxylate + S-methyl-5'-thioadenosine + H(+). The enzyme catalyses (2S)-2-amino-3-butenoate + H2O = 2-oxobutanoate + NH4(+). Its pathway is alkene biosynthesis; ethylene biosynthesis via S-adenosyl-L-methionine; ethylene from S-adenosyl-L-methionine: step 1/2. Inhibited by L-aminoethoxyvinylglycine (AVG). Inhibited by L-vinylglycine (L-VG). Inhibited by S-methylmethionine through a L-VG ketimine intermediate. Functionally, catalyzes the formation of 1-aminocyclopropane-1-carboxylate, a direct precursor of ethylene in higher plants. Also catalyzes the conversion of L-vinylglycine (L-VG) to alpha-ketobutyrate and ammonia. Can use S-methylmethionine as substrate. This is 1-aminocyclopropane-1-carboxylate synthase from Malus domestica (Apple).